The chain runs to 297 residues: PAK4-inhibitor INKA2 (297 aa).

3 disordered regions span residues 82 to 109, 175 to 200, and 234 to 285; these read GRGPARPTVCSPSSQPSLGSSTKFPSHR, LEKGGEKGETGGAREPKGEKGQPQEL, and TPMV…LEHS. Low complexity predominate over residues 92–102; it reads SPSSQPSLGSS. Residues 137-180 form an inka box region; it reads EPDDWTSTLMSRGRNRQPLVLGDNVFADLVGNWLDLPELEKGGE. A compositionally biased stretch (basic residues) spans 244-253; that stretch reads RSQKVKKRSL.

It belongs to the INKA family. In terms of assembly, interacts with PAK4.

It is found in the nucleus. Its function is as follows. Inhibitor of the serine/threonine-protein kinase PAK4. Acts by binding PAK4 in a substrate-like manner, inhibiting the protein kinase activity. The protein is PAK4-inhibitor INKA2 of Homo sapiens (Human).